Reading from the N-terminus, the 147-residue chain is Hemoglobin subunit deltaH (147 aa).

A Globin domain is found at 3 to 147 (RLTDSEKAEV…MANALAHKYH (145 aa)). H64 and H93 together coordinate heme b.

Belongs to the globin family. As to quaternary structure, heterotetramer of two delta chains and two alpha chains. Red blood cells.

The protein is Hemoglobin subunit deltaH of Procavia capensis (Rock hyrax).